A 539-amino-acid polypeptide reads, in one-letter code: Membrane protein insertase YidC (539 aa).

Residues 6–26 (NILLIALALVSFLLFQQWNVA) traverse the membrane as a helical segment. Residues 35 to 44 (EQAQSGSTLP) show a composition bias toward polar residues. The tract at residues 35–55 (EQAQSGSTLPAPSYADDLDPA) is disordered. 4 helical membrane passes run 341 to 361 (SFIQ…TFIV), 416 to 436 (LGGC…YWAL), 454 to 474 (LSAQ…MFLI), and 495 to 515 (PVMF…YWLV).

Belongs to the OXA1/ALB3/YidC family. Type 1 subfamily. Interacts with the Sec translocase complex via SecD. Specifically interacts with transmembrane segments of nascent integral membrane proteins during membrane integration.

It localises to the cell inner membrane. In terms of biological role, required for the insertion and/or proper folding and/or complex formation of integral membrane proteins into the membrane. Involved in integration of membrane proteins that insert both dependently and independently of the Sec translocase complex, as well as at least some lipoproteins. Aids folding of multispanning membrane proteins. The chain is Membrane protein insertase YidC from Vibrio atlanticus (strain LGP32) (Vibrio splendidus (strain Mel32)).